The primary structure comprises 181 residues: uncharacterized protein (181 aa).

2 stretches are compositionally biased toward gly residues: residues 143 to 156 (RRGGRYGDFGGPRG) and 170 to 181 (GPFGPGYRGPRF). Positions 143-181 (RRGGRYGDFGGPRGPRGPRNDGPFGPFGPFGPGYRGPRF) are disordered.

In terms of assembly, has been detected in a cytochrome bc1-aa3 supercomplex; its deletion however leaves complex activity unaffected.

This is an uncharacterized protein from Corynebacterium glutamicum (strain ATCC 13032 / DSM 20300 / JCM 1318 / BCRC 11384 / CCUG 27702 / LMG 3730 / NBRC 12168 / NCIMB 10025 / NRRL B-2784 / 534).